Consider the following 394-residue polypeptide: Flagellin B (394 aa).

The protein belongs to the bacterial flagellin family.

It localises to the secreted. Its subcellular location is the bacterial flagellum. Flagellin is the subunit protein which polymerizes to form the filaments of bacterial flagella. The sequence is that of Flagellin B (flaB) from Rhizobium meliloti (strain 1021) (Ensifer meliloti).